Consider the following 358-residue polypeptide: Phosphoserine aminotransferase (358 aa).

Residue Arg-41 participates in L-glutamate binding. Residues Ala-75–Ser-76, Trp-100, Thr-148, Asp-167, and Gln-190 each bind pyridoxal 5'-phosphate. Lys-191 is subject to N6-(pyridoxal phosphate)lysine. Residue Asn-233–Thr-234 participates in pyridoxal 5'-phosphate binding.

This sequence belongs to the class-V pyridoxal-phosphate-dependent aminotransferase family. SerC subfamily. As to quaternary structure, homodimer. Pyridoxal 5'-phosphate is required as a cofactor.

The protein resides in the cytoplasm. The enzyme catalyses O-phospho-L-serine + 2-oxoglutarate = 3-phosphooxypyruvate + L-glutamate. It catalyses the reaction 4-(phosphooxy)-L-threonine + 2-oxoglutarate = (R)-3-hydroxy-2-oxo-4-phosphooxybutanoate + L-glutamate. The protein operates within amino-acid biosynthesis; L-serine biosynthesis; L-serine from 3-phospho-D-glycerate: step 2/3. It participates in cofactor biosynthesis; pyridoxine 5'-phosphate biosynthesis; pyridoxine 5'-phosphate from D-erythrose 4-phosphate: step 3/5. In terms of biological role, catalyzes the reversible conversion of 3-phosphohydroxypyruvate to phosphoserine and of 3-hydroxy-2-oxo-4-phosphonooxybutanoate to phosphohydroxythreonine. This chain is Phosphoserine aminotransferase, found in Campylobacter jejuni subsp. jejuni serotype O:2 (strain ATCC 700819 / NCTC 11168).